Here is a 104-residue protein sequence, read N- to C-terminus: Protein RnfH (104 aa).

The tract at residues 80-104 (PLTADPKLNRKRRAKEKASAGKASN) is disordered.

It belongs to the UPF0125 (RnfH) family.

The chain is Protein RnfH from Alcanivorax borkumensis (strain ATCC 700651 / DSM 11573 / NCIMB 13689 / SK2).